Here is a 95-residue protein sequence, read N- to C-terminus: Acylphosphatase (95 aa).

The region spanning 10–95 (CIHATVSGKV…VEDYSDFRVR (86 aa)) is the Acylphosphatase-like domain. Active-site residues include Arg25 and Asn43.

This sequence belongs to the acylphosphatase family.

The catalysed reaction is an acyl phosphate + H2O = a carboxylate + phosphate + H(+). The chain is Acylphosphatase (acyP) from Coxiella burnetii (strain Dugway 5J108-111).